A 151-amino-acid chain; its full sequence is 6,7-dimethyl-8-ribityllumazine synthase (151 aa).

Residues Phe15, 47 to 49, and 71 to 73 each bind 5-amino-6-(D-ribitylamino)uracil; these read TFE and AVI. Residue 76-77 participates in (2S)-2-hydroxy-3-oxobutyl phosphate binding; that stretch reads ET. The active-site Proton donor is the His79. A 5-amino-6-(D-ribitylamino)uracil-binding site is contributed by Leu104. Residue Arg119 coordinates (2S)-2-hydroxy-3-oxobutyl phosphate.

It belongs to the DMRL synthase family.

The catalysed reaction is (2S)-2-hydroxy-3-oxobutyl phosphate + 5-amino-6-(D-ribitylamino)uracil = 6,7-dimethyl-8-(1-D-ribityl)lumazine + phosphate + 2 H2O + H(+). It functions in the pathway cofactor biosynthesis; riboflavin biosynthesis; riboflavin from 2-hydroxy-3-oxobutyl phosphate and 5-amino-6-(D-ribitylamino)uracil: step 1/2. Catalyzes the formation of 6,7-dimethyl-8-ribityllumazine by condensation of 5-amino-6-(D-ribitylamino)uracil with 3,4-dihydroxy-2-butanone 4-phosphate. This is the penultimate step in the biosynthesis of riboflavin. The polypeptide is 6,7-dimethyl-8-ribityllumazine synthase (Metallosphaera sedula (strain ATCC 51363 / DSM 5348 / JCM 9185 / NBRC 15509 / TH2)).